A 222-amino-acid polypeptide reads, in one-letter code: Phosphoglycolate phosphatase (222 aa).

Asp-12 (nucleophile) is an active-site residue. Mg(2+) is bound by residues Asp-12, Asp-14, and Asp-175.

This sequence belongs to the HAD-like hydrolase superfamily. CbbY/CbbZ/Gph/YieH family. Requires Mg(2+) as cofactor.

It catalyses the reaction 2-phosphoglycolate + H2O = glycolate + phosphate. It participates in organic acid metabolism; glycolate biosynthesis; glycolate from 2-phosphoglycolate: step 1/1. Specifically catalyzes the dephosphorylation of 2-phosphoglycolate. Is involved in the dissimilation of the intracellular 2-phosphoglycolate formed during the DNA repair of 3'-phosphoglycolate ends, a major class of DNA lesions induced by oxidative stress. The sequence is that of Phosphoglycolate phosphatase from Chromobacterium violaceum (strain ATCC 12472 / DSM 30191 / JCM 1249 / CCUG 213 / NBRC 12614 / NCIMB 9131 / NCTC 9757 / MK).